Consider the following 37-residue polypeptide: Serrulin (37 aa).

A disordered region spans residues 16-37 (FGGGGIGGGGFGGGYGGGKIKG). At lysine 36 the chain carries Lysine amide.

Expressed in hemocytes (at protein level).

The protein resides in the secreted. Antimicrobial protein with activity against Gram-positive and Gram-negative bacteria, filamentous fungus, and yeast. Was tested against Micrococcus luteus A270 (MIC=0.5-1 uM), Echerichia coli SBS 363 (MIC=9-16 uM), Pseudomonas aeruginosa (MIC=0.01-0.3 uM), Aspergillus niger (MIC=3-6 uM), and Candida albicans MDM8 (MIC=1.5-3 uM). Has no hemolytic activity against human erythrocytes. This Tityus serrulatus (Brazilian scorpion) protein is Serrulin.